A 348-amino-acid polypeptide reads, in one-letter code: Heat-inducible transcription repressor HrcA (348 aa).

This sequence belongs to the HrcA family.

Negative regulator of class I heat shock genes (grpE-dnaK-dnaJ and groELS operons). Prevents heat-shock induction of these operons. The sequence is that of Heat-inducible transcription repressor HrcA from Thermomicrobium roseum (strain ATCC 27502 / DSM 5159 / P-2).